Here is a 177-residue protein sequence, read N- to C-terminus: Translation initiation factor IF-3 (177 aa).

The protein belongs to the IF-3 family. As to quaternary structure, monomer.

It localises to the cytoplasm. Its function is as follows. IF-3 binds to the 30S ribosomal subunit and shifts the equilibrium between 70S ribosomes and their 50S and 30S subunits in favor of the free subunits, thus enhancing the availability of 30S subunits on which protein synthesis initiation begins. This Synechocystis sp. (strain ATCC 27184 / PCC 6803 / Kazusa) protein is Translation initiation factor IF-3.